Reading from the N-terminus, the 643-residue chain is Ecto-NOX disulfide-thiol exchanger 1 (643 aa).

One can recognise an RRM domain in the interval 142–221; the sequence is KTVFVGGLPE…GRLHVDFAQA (80 aa). 2 coiled-coil regions span residues 307–342 and 425–570; these read VQSA…LTGI and QAYA…EALL.

This sequence belongs to the ENOX family. It depends on Cu cation as a cofactor. As to expression, expressed in lymphocyte cells, breast and breast cancer (at protein level). Found in the sera of cancer patients with a wide variety of cancers including breast, prostate, lung and ovarian cancers, leukemias, and lymphomas. Found also in the serum of healthy volunteers or patients with disorders other than cancer. Probably shed into serum by cancer cells.

The protein localises to the cell membrane. It is found in the secreted. Its subcellular location is the extracellular space. Its activity is regulated as follows. Not inhibited by the antitumor sulfonylurea LY181984, the vabilloid capsaicin, and retinoids. Its function is as follows. Probably acts as a terminal oxidase of plasma electron transport from cytosolic NAD(P)H via hydroquinones to acceptors at the cell surface. Hydroquinone oxidase activity alternates with a protein disulfide-thiol interchange/oxidoreductase activity which may control physical membrane displacements associated with vesicle budding or cell enlargement. The activities oscillate with a period length of 24 minutes and play a role in control of the ultradian cellular biological clock. The chain is Ecto-NOX disulfide-thiol exchanger 1 (ENOX1) from Homo sapiens (Human).